We begin with the raw amino-acid sequence, 306 residues long: Acetyl-coenzyme A carboxylase carboxyl transferase subunit beta (306 aa).

The CoA carboxyltransferase N-terminal domain maps to 27 to 296 (LWHKCPSCEA…PRFVAPVIEP (270 aa)). Zn(2+)-binding residues include Cys-31, Cys-34, Cys-50, and Cys-53. A C4-type zinc finger spans residues 31-53 (CPSCEAVLYRPELEKTLDVCPKC).

This sequence belongs to the AccD/PCCB family. Acetyl-CoA carboxylase is a heterohexamer composed of biotin carboxyl carrier protein (AccB), biotin carboxylase (AccC) and two subunits each of ACCase subunit alpha (AccA) and ACCase subunit beta (AccD). Zn(2+) serves as cofactor.

The protein resides in the cytoplasm. It carries out the reaction N(6)-carboxybiotinyl-L-lysyl-[protein] + acetyl-CoA = N(6)-biotinyl-L-lysyl-[protein] + malonyl-CoA. It functions in the pathway lipid metabolism; malonyl-CoA biosynthesis; malonyl-CoA from acetyl-CoA: step 1/1. Its function is as follows. Component of the acetyl coenzyme A carboxylase (ACC) complex. Biotin carboxylase (BC) catalyzes the carboxylation of biotin on its carrier protein (BCCP) and then the CO(2) group is transferred by the transcarboxylase to acetyl-CoA to form malonyl-CoA. The sequence is that of Acetyl-coenzyme A carboxylase carboxyl transferase subunit beta from Pseudomonas syringae pv. syringae (strain B728a).